Here is a 351-residue protein sequence, read N- to C-terminus: DNA polymerase IV (351 aa).

The region spanning 4–185 (IIHIDMDCFY…LPLRKIPGVG (182 aa)) is the UmuC domain. Residues D8 and D103 each contribute to the Mg(2+) site. E104 is a catalytic residue.

It belongs to the DNA polymerase type-Y family. As to quaternary structure, monomer. The cofactor is Mg(2+).

The protein localises to the cytoplasm. The enzyme catalyses DNA(n) + a 2'-deoxyribonucleoside 5'-triphosphate = DNA(n+1) + diphosphate. In terms of biological role, poorly processive, error-prone DNA polymerase involved in untargeted mutagenesis. Copies undamaged DNA at stalled replication forks, which arise in vivo from mismatched or misaligned primer ends. These misaligned primers can be extended by PolIV. Exhibits no 3'-5' exonuclease (proofreading) activity. May be involved in translesional synthesis, in conjunction with the beta clamp from PolIII. The protein is DNA polymerase IV of Photorhabdus laumondii subsp. laumondii (strain DSM 15139 / CIP 105565 / TT01) (Photorhabdus luminescens subsp. laumondii).